The sequence spans 199 residues: Recombination protein RecR (199 aa).

The C4-type zinc finger occupies 56 to 71 (CRSCFNVAQSELCRIC). The Toprim domain maps to 79–174 (ALICVVEEPK…RVTRLASGLP (96 aa)).

It belongs to the RecR family.

In terms of biological role, may play a role in DNA repair. It seems to be involved in an RecBC-independent recombinational process of DNA repair. It may act with RecF and RecO. The polypeptide is Recombination protein RecR (Frankia alni (strain DSM 45986 / CECT 9034 / ACN14a)).